The primary structure comprises 100 residues: MAKKSLIQREKKRQELKQKYHSIRLYLKKRMSEASLLDEKWEISEKLQSLPRNSAPTRLHRRCLLTGRSRANYRDFGLSRHVLREMAHACLLPGVIKSSW.

This sequence belongs to the universal ribosomal protein uS14 family. In terms of assembly, part of the 30S ribosomal subunit.

It localises to the plastid. The protein localises to the chloroplast. In terms of biological role, binds 16S rRNA, required for the assembly of 30S particles. The polypeptide is Small ribosomal subunit protein uS14c (Huperzia lucidula (Shining clubmoss)).